Reading from the N-terminus, the 570-residue chain is Urease subunit alpha (570 aa).

The 439-residue stretch at 132–570 folds into the Urease domain; that stretch reads GGIDTHVHFI…LPMAQRYFLF (439 aa). Residues H137 and H139 each coordinate Ni(2+). The substrate site is built by H139 and A170. A Ni(2+)-binding site is contributed by K220. N6-carboxylysine is present on K220. Substrate-binding residues include H222 and H249. Ni(2+) contacts are provided by H249 and H275. H323 functions as the Proton donor in the catalytic mechanism. Ni(2+) is bound at residue D363. A366 provides a ligand contact to substrate.

It belongs to the metallo-dependent hydrolases superfamily. Urease alpha subunit family. As to quaternary structure, heterotrimer of UreA (gamma), UreB (beta) and UreC (alpha) subunits. Three heterotrimers associate to form the active enzyme. Ni cation serves as cofactor. Carboxylation allows a single lysine to coordinate two nickel ions.

The protein resides in the cytoplasm. It carries out the reaction urea + 2 H2O + H(+) = hydrogencarbonate + 2 NH4(+). It participates in nitrogen metabolism; urea degradation; CO(2) and NH(3) from urea (urease route): step 1/1. Inhibited by fluoride. This Sporosarcina pasteurii (Bacillus pasteurii) protein is Urease subunit alpha.